The following is a 93-amino-acid chain: Small ribosomal subunit protein uS19 (93 aa).

Belongs to the universal ribosomal protein uS19 family.

In terms of biological role, protein S19 forms a complex with S13 that binds strongly to the 16S ribosomal RNA. The chain is Small ribosomal subunit protein uS19 from Maridesulfovibrio salexigens (strain ATCC 14822 / DSM 2638 / NCIMB 8403 / VKM B-1763) (Desulfovibrio salexigens).